The primary structure comprises 187 residues: ATP synthase subunit delta, chloroplastic (187 aa).

Belongs to the ATPase delta chain family. As to quaternary structure, F-type ATPases have 2 components, F(1) - the catalytic core - and F(0) - the membrane proton channel. F(1) has five subunits: alpha(3), beta(3), gamma(1), delta(1), epsilon(1). CF(0) has four main subunits: a(1), b(1), b'(1) and c(10-14). The alpha and beta chains form an alternating ring which encloses part of the gamma chain. F(1) is attached to F(0) by a central stalk formed by the gamma and epsilon chains, while a peripheral stalk is formed by the delta, b and b' chains.

It localises to the plastid. Its subcellular location is the chloroplast thylakoid membrane. In terms of biological role, f(1)F(0) ATP synthase produces ATP from ADP in the presence of a proton or sodium gradient. F-type ATPases consist of two structural domains, F(1) containing the extramembraneous catalytic core and F(0) containing the membrane proton channel, linked together by a central stalk and a peripheral stalk. During catalysis, ATP synthesis in the catalytic domain of F(1) is coupled via a rotary mechanism of the central stalk subunits to proton translocation. Functionally, this protein is part of the stalk that links CF(0) to CF(1). It either transmits conformational changes from CF(0) to CF(1) or is implicated in proton conduction. In Thalassiosira pseudonana (Marine diatom), this protein is ATP synthase subunit delta, chloroplastic.